We begin with the raw amino-acid sequence, 155 residues long: Ubiquinone biosynthesis protein COQ4 homolog, mitochondrial (155 aa).

It belongs to the COQ4 family. In terms of assembly, component of a multi-subunit COQ enzyme complex. The cofactor is Zn(2+).

The protein localises to the mitochondrion inner membrane. It catalyses the reaction a 4-hydroxy-3-methoxy-5-(all-trans-polyprenyl)benzoate + H(+) = a 2-methoxy-6-(all-trans-polyprenyl)phenol + CO2. The protein operates within cofactor biosynthesis; ubiquinone biosynthesis. Its function is as follows. Lyase that catalyzes the C1-decarboxylation of 4-hydroxy-3-methoxy-5-(all-trans-polyprenyl)benzoic acid into 2-methoxy-6-(all-trans-polyprenyl)phenol during ubiquinone biosynthesis. The polypeptide is Ubiquinone biosynthesis protein COQ4 homolog, mitochondrial (Cryptosporidium hominis).